Reading from the N-terminus, the 305-residue chain is Homoserine O-acetyltransferase (305 aa).

Cysteine 142 (acyl-thioester intermediate) is an active-site residue. Substrate-binding residues include lysine 163 and serine 192. The Proton acceptor role is filled by histidine 235. Glutamate 237 is an active-site residue. Arginine 249 serves as a coordination point for substrate.

This sequence belongs to the MetA family.

It localises to the cytoplasm. The enzyme catalyses L-homoserine + acetyl-CoA = O-acetyl-L-homoserine + CoA. The protein operates within amino-acid biosynthesis; L-methionine biosynthesis via de novo pathway; O-acetyl-L-homoserine from L-homoserine: step 1/1. Functionally, transfers an acetyl group from acetyl-CoA to L-homoserine, forming acetyl-L-homoserine. The sequence is that of Homoserine O-acetyltransferase from Dinoroseobacter shibae (strain DSM 16493 / NCIMB 14021 / DFL 12).